A 239-amino-acid polypeptide reads, in one-letter code: Ras-like protein B (239 aa).

Residues 13-18 (GVGKTA), 29-35 (VETYDPT), 59-60 (AG), 139-142 (NKSD), and 169-171 (SAK) contribute to the GTP site. An Effector region motif is present at residues 32–40 (YDPTIEDSY). The disordered stretch occupies residues 191–227 (RQQQQGGRAQDRRPTGLGPMRDRDAGPEYPKTFRPDR). A compositionally biased stretch (basic and acidic residues) spans 199-226 (AQDRRPTGLGPMRDRDAGPEYPKTFRPD).

Belongs to the small GTPase superfamily. Ras family. In terms of assembly, interacts with mpkA.

It catalyses the reaction GTP + H2O = GDP + phosphate + H(+). Ras-like protein involved in the activation of Ras protein signal transduction. Ras proteins bind GDP/GTP and possess intrinsic GTPase activity. Plays a role in hyphal morphology and conidiophore development. Required for full virulence. In Aspergillus fumigatus (strain ATCC MYA-4609 / CBS 101355 / FGSC A1100 / Af293) (Neosartorya fumigata), this protein is Ras-like protein B.